Reading from the N-terminus, the 310-residue chain is Putative methyltransferase mtx subunit H (310 aa).

The protein belongs to the MtrH family. In terms of assembly, may be part of a complex composed of 3 subunits; MtxA, MtxH and MtxX.

The chain is Putative methyltransferase mtx subunit H (mtxH) from Methanosarcina barkeri (strain Fusaro / DSM 804).